A 230-amino-acid chain; its full sequence is Cytidylate kinase (230 aa).

G14–S22 contributes to the ATP binding site.

Belongs to the cytidylate kinase family. Type 1 subfamily.

Its subcellular location is the cytoplasm. The enzyme catalyses CMP + ATP = CDP + ADP. It catalyses the reaction dCMP + ATP = dCDP + ADP. This is Cytidylate kinase from Buchnera aphidicola subsp. Baizongia pistaciae (strain Bp).